The following is a 242-amino-acid chain: MATNGENGRHQEVGHKSLLQSDALYQYILETSVYPREPEPMKELREITAKHPWNIMTTSADEGQFLSMLLKLINAKNTMEIGVFTGYSLLATAMALPDDGKILAMDINRDNYEIGLPVIEKAGLAHKIEFKEGPALPVLDQMIEDGKYHGSYDFIFVDADKDNYLNYHKRLIDLVKVGGLIGYDNTLWNGSVVAPPDAPLRKYVRYYRDFVLELNKALAADSRIEICQLPVGDGITLCRRIS.

K16 contacts substrate. Residues T58, E80, 82–83, S88, D106, and A135 contribute to the S-adenosyl-L-methionine site; that span reads GV. Position 158 (D158) interacts with substrate. D158 is an a divalent metal cation binding site. D160 lines the S-adenosyl-L-methionine pocket. A divalent metal cation-binding residues include D184 and N185. N189 lines the substrate pocket.

This sequence belongs to the class I-like SAM-binding methyltransferase superfamily. Cation-dependent O-methyltransferase family. CCoAMT subfamily. Mg(2+) is required as a cofactor. In terms of tissue distribution, mostly expressed in the bottom and middle parts of the stems.

The catalysed reaction is (E)-caffeoyl-CoA + S-adenosyl-L-methionine = (E)-feruloyl-CoA + S-adenosyl-L-homocysteine + H(+). It functions in the pathway aromatic compound metabolism; phenylpropanoid biosynthesis. Methylates caffeoyl-CoA to feruloyl-CoA and 5-hydroxyferuloyl-CoA to sinapoyl-CoA. Plays a role in the synthesis of feruloylated polysaccharides. Involved in the reinforcement of the plant cell wall. Also involved in the responding to wounding or pathogen challenge by the increased formation of cell wall-bound ferulic acid polymers. Also methylates free caffeic and 5-hydroxyferulic acids. The polypeptide is Caffeoyl-CoA O-methyltransferase 3 (CCOAOMT3) (Nicotiana tabacum (Common tobacco)).